Consider the following 122-residue polypeptide: Secreted RxLR effector protein 80 (122 aa).

Residues 1 to 21 (MKKRALPIVIFVISLQQSSQS) form the signal peptide. The RxLR motif lies at 72–75 (RSLR).

This sequence belongs to the RxLR effector family.

It localises to the secreted. The protein resides in the host endoplasmic reticulum membrane. Secreted effector that dos not suppress the host cell death induced by cell death-inducing proteins. The chain is Secreted RxLR effector protein 80 from Plasmopara viticola (Downy mildew of grapevine).